A 398-amino-acid chain; its full sequence is MRGSYLFTSESVSEGHPDKVCDRISDEIVDLFFSEGPKAGVDPWAIRAACETLATTNKVVIAGETRGPESVTKEKIESVVRAAIKDIGYEQDGFHWKTADIDILLHPQSADIAQGVDALQPGANKEEGAGDQGIMFGYACNETPDLMPAPIFYAHKILRLISEARHSGKEKVLGPDSKSQVTVQYENGKPVGVREIVVSHQHLIEDMSSDQVRERVEPYVREALPKAWVTDKTIWHINPTGKFFIGGPDGDAGLTGRKIIVDTYGGAAPHGGGAFSGKDPTKVDRSAAYAARYLAKNIVAAGLADRCTLQLAYAIGVARPLSIYIDTHGTGKAPEDTLERIVSEAMDLTPRGIRKHLDLNRPIYARTSSYGHFGRTPDNEGGFSWEKTDLAEVLKRAV.

H16 provides a ligand contact to ATP. Mg(2+) is bound at residue D18. E51 contributes to the K(+) binding site. L-methionine contacts are provided by E64 and Q108. The interval 108 to 118 (QSADIAQGVDA) is flexible loop. Residues 176–178 (DSK), 242–243 (KF), D251, 257–258 (RK), A274, and K278 each bind ATP. D251 is a binding site for L-methionine. Residue K282 coordinates L-methionine.

It belongs to the AdoMet synthase family. As to quaternary structure, homotetramer; dimer of dimers. Requires Mg(2+) as cofactor. It depends on K(+) as a cofactor.

The protein localises to the cytoplasm. It carries out the reaction L-methionine + ATP + H2O = S-adenosyl-L-methionine + phosphate + diphosphate. It participates in amino-acid biosynthesis; S-adenosyl-L-methionine biosynthesis; S-adenosyl-L-methionine from L-methionine: step 1/1. Functionally, catalyzes the formation of S-adenosylmethionine (AdoMet) from methionine and ATP. The overall synthetic reaction is composed of two sequential steps, AdoMet formation and the subsequent tripolyphosphate hydrolysis which occurs prior to release of AdoMet from the enzyme. This chain is S-adenosylmethionine synthase, found in Nitrobacter hamburgensis (strain DSM 10229 / NCIMB 13809 / X14).